The sequence spans 549 residues: Glucose-6-phosphate isomerase (549 aa).

Glu353 (proton donor) is an active-site residue. Active-site residues include His384 and Lys513.

The protein belongs to the GPI family.

The protein localises to the cytoplasm. It catalyses the reaction alpha-D-glucose 6-phosphate = beta-D-fructose 6-phosphate. The protein operates within carbohydrate biosynthesis; gluconeogenesis. Its pathway is carbohydrate degradation; glycolysis; D-glyceraldehyde 3-phosphate and glycerone phosphate from D-glucose: step 2/4. Functionally, catalyzes the reversible isomerization of glucose-6-phosphate to fructose-6-phosphate. In Brucella canis (strain ATCC 23365 / NCTC 10854 / RM-666), this protein is Glucose-6-phosphate isomerase.